Reading from the N-terminus, the 722-residue chain is Bifunctional UDP-N-acetylglucosamine 2-epimerase/N-acetylmannosamine kinase (722 aa).

Arg19, Ser23, Arg113, His220, and Asn253 together coordinate UDP. The CMP-N-acetyl-beta-neuraminate site is built by Lys259, Glu271, Lys280, and His281. 5 residues coordinate UDP: Val282, Ser301, Ser302, Glu307, and Arg321. The tract at residues 406 to 722 is N-acetylmannosamine kinase; it reads TLSALAVDLG…VLDYTTRRIH (317 aa). Position 413 (Asp413) interacts with Mg(2+). Gly416 is a binding site for an N-acyl-D-mannosamine 6-phosphate. 3 residues coordinate ADP: Thr417, Asn418, and Arg420. Positions 476, 477, 489, 516, 517, and 545 each coordinate an N-acyl-D-mannosamine 6-phosphate. An N-acyl-D-mannosamine-binding residues include Gly476, Arg477, Thr489, Asn516, and Asp517. The active site involves Asp517. An N-acyl-D-mannosamine-binding residues include Glu566 and His569. Position 569 (His569) interacts with an N-acyl-D-mannosamine 6-phosphate. Residues His569, Cys579, Cys581, and Cys586 each contribute to the Zn(2+) site. Position 588 (Glu588) interacts with an N-acyl-D-mannosamine 6-phosphate. Glu588 contacts an N-acyl-D-mannosamine.

In the N-terminal section; belongs to the UDP-N-acetylglucosamine 2-epimerase family. The protein in the C-terminal section; belongs to the ROK (NagC/XylR) family. As to quaternary structure, homodimer. Homotetramer. Homohexamer. The hexameric form exhibits both enzyme activities, whereas the dimeric form only catalyzes the phosphorylation of N-acyl-D-mannosamine. Phosphorylated. Phosphorylation by PKC activates the UDP-N-acetylglucosamine 2-epimerase activity.

It localises to the cytoplasm. The protein resides in the cytosol. It catalyses the reaction UDP-N-acetyl-alpha-D-glucosamine + H2O = aldehydo-N-acetyl-D-mannosamine + UDP + H(+). The enzyme catalyses an N-acyl-D-mannosamine + ATP = an N-acyl-D-mannosamine 6-phosphate + ADP + H(+). It participates in amino-sugar metabolism; N-acetylneuraminate biosynthesis. With respect to regulation, the UDP-N-acetylglucosamine 2-epimerase activity, in contrast to the N-acetylmannosamine kinase activity, exhibits allosteric regulation by cytidine monophosphate-N-acetylneuraminic acid (CMP-Neu5Ac), the end product of neuraminic acid biosynthesis. Moreover, the activity is contingent upon the oligomeric state of the enzyme. The monomeric form is inactive, while the dimeric form selectively catalyzes the phosphorylation of N-acetylmannosamine. The hexameric form, on the other hand, demonstrates full proficiency in both enzyme activities. Furthermore, the UDP-N-acetylglucosamine 2-epimerase activity is increased by PKC-mediated phosphorylation. Functionally, bifunctional enzyme that possesses both UDP-N-acetylglucosamine 2-epimerase and N-acetylmannosamine kinase activities, and serves as the initiator of the biosynthetic pathway leading to the production of N-acetylneuraminic acid (NeuAc), a critical precursor in the synthesis of sialic acids. By catalyzing this pivotal and rate-limiting step in sialic acid biosynthesis, this enzyme assumes a pivotal role in governing the regulation of cell surface sialylation, playing a role in embryonic angiogenesis. Sialic acids represent a category of negatively charged sugars that reside on the surface of cells as terminal components of glycoconjugates and mediate important functions in various cellular processes, including cell adhesion, signal transduction, and cellular recognition. This chain is Bifunctional UDP-N-acetylglucosamine 2-epimerase/N-acetylmannosamine kinase (GNE), found in Cricetulus griseus (Chinese hamster).